The following is a 361-amino-acid chain: Blue-sensitive opsin (361 aa).

The Extracellular segment spans residues methionine 1 to leucine 43. An N-linked (GlcNAc...) asparagine glycan is attached at asparagine 24. The helical transmembrane segment at phenylalanine 44–cysteine 68 threads the bilayer. Topologically, residues threonine 69 to asparagine 80 are cytoplasmic. Residues tyrosine 81–serine 106 traverse the membrane as a helical segment. The Extracellular portion of the chain corresponds to glutamine 107 to glutamate 120. An intrachain disulfide couples cysteine 117 to cysteine 194. A helical membrane pass occupies residues glycine 121–phenylalanine 140. The Cytoplasmic portion of the chain corresponds to glutamate 141–histidine 159. A helical membrane pass occupies residues alanine 160–serine 183. Over arginine 184 to serine 209 the chain is Extracellular. The helical transmembrane segment at tyrosine 210 to leucine 237 threads the bilayer. Residues arginine 238 to lysine 259 are Cytoplasmic-facing. A helical transmembrane segment spans residues methionine 260–valine 283. Residues threonine 284 to glutamate 291 are Extracellular-facing. Residues valine 292–methionine 316 form a helical membrane-spanning segment. Lysine 303 is subject to N6-(retinylidene)lysine. Over asparagine 317–alanine 361 the chain is Cytoplasmic. The disordered stretch occupies residues aspartate 338–alanine 361. Residues serine 342 to alanine 361 show a composition bias toward low complexity.

This sequence belongs to the G-protein coupled receptor 1 family. Opsin subfamily. Post-translationally, phosphorylated on some or all of the serine and threonine residues present in the C-terminal region. As to expression, the color pigments are found in the cone photoreceptor cells.

It localises to the membrane. In terms of biological role, visual pigments are the light-absorbing molecules that mediate vision. They consist of an apoprotein, opsin, covalently linked to cis-retinal. This Gallus gallus (Chicken) protein is Blue-sensitive opsin.